A 206-amino-acid chain; its full sequence is LexA repressor (206 aa).

The segment at residues 29–49 (VREICEAVGLRSTSTVHGHLA) is a DNA-binding region (H-T-H motif). Residues serine 130 and lysine 167 each act as for autocatalytic cleavage activity in the active site.

It belongs to the peptidase S24 family. Homodimer.

The catalysed reaction is Hydrolysis of Ala-|-Gly bond in repressor LexA.. Represses a number of genes involved in the response to DNA damage (SOS response), including recA and lexA. In the presence of single-stranded DNA, RecA interacts with LexA causing an autocatalytic cleavage which disrupts the DNA-binding part of LexA, leading to derepression of the SOS regulon and eventually DNA repair. In Alkaliphilus oremlandii (strain OhILAs) (Clostridium oremlandii (strain OhILAs)), this protein is LexA repressor.